The chain runs to 219 residues: 7-cyano-7-deazaguanine synthase (219 aa).

Residue 10 to 20 (FSGGQDSTTCL) coordinates ATP. 4 residues coordinate Zn(2+): Cys186, Cys195, Cys198, and Cys201.

The protein belongs to the QueC family. Homodimer. It depends on Zn(2+) as a cofactor.

The enzyme catalyses 7-carboxy-7-deazaguanine + NH4(+) + ATP = 7-cyano-7-deazaguanine + ADP + phosphate + H2O + H(+). It participates in purine metabolism; 7-cyano-7-deazaguanine biosynthesis. Functionally, catalyzes the ATP-dependent conversion of 7-carboxy-7-deazaguanine (CDG) to 7-cyano-7-deazaguanine (preQ(0)). This Bacillus licheniformis (strain ATCC 14580 / DSM 13 / JCM 2505 / CCUG 7422 / NBRC 12200 / NCIMB 9375 / NCTC 10341 / NRRL NRS-1264 / Gibson 46) protein is 7-cyano-7-deazaguanine synthase.